The following is a 1003-amino-acid chain: MSYTFTRGPVWKYSQSVQYGSHENIPRLSYSTFLPHFEFQDIIPPDDFLTSDEEQDLVLFGTMRGQVVGLRYYTGVVNNNEMVALQREPNNPYDKNAIKVNNVNGNQVGHIKREIAAAVAYIMDNKLAQVEGVVPFGASNTFTMPLYMTFWGKEENRNVVLEQLKKHGFKLGPTPKTLGSSLENAWGSGRAGPSYSRPAHVAVQMTTDQLKTEFDKLFEDLKEDDRTVEMEPAEAIETPLLPHQKQALAWMIARENSKELPPFWEQRNDLYYNTITNFSVKERPENVHGGILADDMGLGKTLTAIAVILTNFDDGRPLLSKRGKKNHPGKEYKDETIKRRGSNMDKKEDGHSESSTCGEEPSISGTPEKSSCTLSQLSSVCPKRRKISVQYIESSDSEEIETSELPQKMKGKLKNVQLNTKSRVKGSSKVKEDSKFALTFFASATQRKMLKKGMSMMECSEACDTGERTRATLIICPLSVLSNWIDQFGQHVKSEVHLNFYVYYGPDRIRDSAWLSKQDIILTTYNILTHDYGTKDDSPLHSIKWLRVILDEGHAIRNPNAQQTKAVLELEAERRWVLTGTPIQNSLKDLWSLLSFLKLKPFIDREWWYRIIQRPVTTGDEGGLRRLQSLIKNITLRRTKTSKIKGKPVLELPERKVFIQHITLSEEERKIYQSVKNEGKAAIGRYFTEGTVLAHYADVLGLLLRLRQICCHTHLLTNGMSSSGPSRSDTPEELRKMLIEKMKIILSSGSDEECAICLDSLTFPVITHCAHVFCKPCICQVIHSEQPHAKCPLCRNEIHGDNLLECPPEELACDSDKESSMEWKSSSKINALMHALIELRTKDPNIKSLVVSQFTTFLSLIETPLKASGFVFTRLDGSMAQKKRVESIQRFQNTEAGSPTIMLLSLKAGGVGLNLCAASRVFLMDPAWNPAAEDQCFDRCHRLGQKQEVIITKFIVKDSVEENMLKIQNTKRDLAAGAFGTKKTDANDMKQAKINEIRTLIDL.

Arginine 27 carries the post-translational modification Omega-N-methylarginine. Positions 38–287 are DNA-binding; that stretch reads EFQDIIPPDD…FSVKERPENV (250 aa). Lysine 112 participates in a covalent cross-link: Glycyl lysine isopeptide (Lys-Gly) (interchain with G-Cter in SUMO2). Residue tyrosine 195 is modified to Phosphotyrosine; by JAK2. Lysine 211 participates in a covalent cross-link: Glycyl lysine isopeptide (Lys-Gly) (interchain with G-Cter in SUMO2). ATP is bound at residue 294–301; that stretch reads DDMGLGKT. The segment at 317-373 is disordered; sequence PLLSKRGKKNHPGKEYKDETIKRRGSNMDKKEDGHSESSTCGEEPSISGTPEKSSCT. The span at 328–352 shows a compositional bias: basic and acidic residues; that stretch reads PGKEYKDETIKRRGSNMDKKEDGHS. A compositionally biased stretch (polar residues) spans 353–373; it reads ESSTCGEEPSISGTPEKSSCT. Serine 394, serine 395, and serine 397 each carry phosphoserine. One can recognise a Helicase ATP-binding domain in the interval 433 to 600; sequence DSKFALTFFA…WSLLSFLKLK (168 aa). Positions 551–554 match the DEGH box motif; sequence DEGH. At threonine 730 the chain carries Phosphothreonine. The segment at 754 to 795 adopts an RING-type zinc-finger fold; that stretch reads CAICLDSLTFPVITHCAHVFCKPCICQVIHSEQPHAKCPLCR. Positions 831–990 constitute a Helicase C-terminal domain; that stretch reads ALMHALIELR…TKKTDANDMK (160 aa). The interval 919–1003 is interaction with SP1 and SP3; that stretch reads SRVFLMDPAW…INEIRTLIDL (85 aa).

The protein belongs to the SNF2/RAD54 helicase family. RAD16 subfamily. As to quaternary structure, interacts with SP1 and SP3 independently of DNA; the interaction with these transcriptional factors may be required for basal transcription of target genes. Interacts with EGR1; the interaction requires prior binding to DNA and represses c-Rel via a DNA looping mechanism. Interacts with GATA4. Interacts with PCNA; the interaction promotes polyubiquitination of PCNA through association with the UBE2B-RAD18 and UBE2V2-UBE2N ubiquitin ligase complexes. Interacts with RAD18, SHPRH, UBE2V2 and UBE2N. In terms of tissue distribution, expressed in brain, heart, kidney, liver, lung, pancreas, placenta and skeletal muscle.

The protein resides in the cytoplasm. Its subcellular location is the nucleus. The protein localises to the nucleolus. It localises to the nucleoplasm. The catalysed reaction is S-ubiquitinyl-[E2 ubiquitin-conjugating enzyme]-L-cysteine + [acceptor protein]-L-lysine = [E2 ubiquitin-conjugating enzyme]-L-cysteine + N(6)-ubiquitinyl-[acceptor protein]-L-lysine.. It functions in the pathway protein modification; protein ubiquitination. Its function is as follows. Has both helicase and E3 ubiquitin ligase activities. Possesses intrinsic ATP-dependent nucleosome-remodeling activity. This activity may be required for transcriptional activation or repression of specific target promoters. These may include the SERPINE1, to which this protein can bind directly. Plays a role in error-free postreplication repair (PRR) of damaged DNA and maintains genomic stability through acting as a ubiquitin ligase for 'Lys-63'-linked polyubiquitination of chromatin-bound PCNA. The polypeptide is Helicase-like transcription factor (Hltf) (Mus musculus (Mouse)).